The chain runs to 303 residues: UDP-N-acetylenolpyruvoylglucosamine reductase (303 aa).

The FAD-binding PCMH-type domain occupies 30 to 196 (IGGPADLLII…LEAVFKLKQD (167 aa)). Arg-174 is a catalytic residue. Ser-225 (proton donor) is an active-site residue. Glu-295 is an active-site residue.

This sequence belongs to the MurB family. The cofactor is FAD.

It is found in the cytoplasm. The catalysed reaction is UDP-N-acetyl-alpha-D-muramate + NADP(+) = UDP-N-acetyl-3-O-(1-carboxyvinyl)-alpha-D-glucosamine + NADPH + H(+). It participates in cell wall biogenesis; peptidoglycan biosynthesis. In terms of biological role, cell wall formation. The chain is UDP-N-acetylenolpyruvoylglucosamine reductase from Bacillus pumilus (strain SAFR-032).